Reading from the N-terminus, the 97-residue chain is U6-theraphotoxin-Hhn1a 2 (97 aa).

The N-terminal stretch at Met-1–Ala-33 is a signal peptide. Positions Ser-34–Arg-61 are excised as a propeptide. Intrachain disulfides connect Cys-63–Cys-77, Cys-70–Cys-82, and Cys-76–Cys-89.

It belongs to the neurotoxin 10 (Hwtx-1) family. 12 (Hntx-12) subfamily. In terms of tissue distribution, expressed by the venom gland.

It is found in the secreted. Its function is as follows. Ion channel inhibitor. In Cyriopagopus hainanus (Chinese bird spider), this protein is U6-theraphotoxin-Hhn1a 2.